The following is a 322-amino-acid chain: Cysteine synthase (322 aa).

Hydrogen sulfide-binding residues include Asn-8 and Arg-35. Lys-42 carries the N6-(pyridoxal phosphate)lysine modification. Residues Asn-72 and Gly-177 to Thr-181 contribute to the pyridoxal 5'-phosphate site. Residue Leu-269 participates in hydrogen sulfide binding. Ser-273 is a pyridoxal 5'-phosphate binding site.

The protein belongs to the cysteine synthase/cystathionine beta-synthase family. In terms of assembly, homodimer. Pyridoxal 5'-phosphate is required as a cofactor.

It carries out the reaction O-acetyl-L-serine + hydrogen sulfide = L-cysteine + acetate. It functions in the pathway amino-acid biosynthesis; L-cysteine biosynthesis; L-cysteine from L-serine: step 2/2. The protein is Cysteine synthase (cysK) of Buchnera aphidicola subsp. Schizaphis graminum (strain Sg).